We begin with the raw amino-acid sequence, 419 residues long: Serine--tRNA ligase (419 aa).

226–228 contacts L-serine; the sequence is TSE. ATP-binding positions include 257 to 259 and Val273; that span reads RRE. Glu280 contacts L-serine. Position 344 to 347 (344 to 347) interacts with ATP; that stretch reads ELTS. L-serine is bound at residue Thr379.

Belongs to the class-II aminoacyl-tRNA synthetase family. Type-1 seryl-tRNA synthetase subfamily. Homodimer. The tRNA molecule binds across the dimer.

It is found in the cytoplasm. It catalyses the reaction tRNA(Ser) + L-serine + ATP = L-seryl-tRNA(Ser) + AMP + diphosphate + H(+). The enzyme catalyses tRNA(Sec) + L-serine + ATP = L-seryl-tRNA(Sec) + AMP + diphosphate + H(+). It participates in aminoacyl-tRNA biosynthesis; selenocysteinyl-tRNA(Sec) biosynthesis; L-seryl-tRNA(Sec) from L-serine and tRNA(Sec): step 1/1. Its function is as follows. Catalyzes the attachment of serine to tRNA(Ser). Is also able to aminoacylate tRNA(Sec) with serine, to form the misacylated tRNA L-seryl-tRNA(Sec), which will be further converted into selenocysteinyl-tRNA(Sec). This chain is Serine--tRNA ligase, found in Mycobacterium tuberculosis (strain CDC 1551 / Oshkosh).